Consider the following 730-residue polypeptide: 1,4-alpha-glucan branching enzyme GlgB (730 aa).

D405 (nucleophile) is an active-site residue. E458 (proton donor) is an active-site residue.

It belongs to the glycosyl hydrolase 13 family. GlgB subfamily. In terms of assembly, monomer.

It carries out the reaction Transfers a segment of a (1-&gt;4)-alpha-D-glucan chain to a primary hydroxy group in a similar glucan chain.. It participates in glycan biosynthesis; glycogen biosynthesis. Functionally, catalyzes the formation of the alpha-1,6-glucosidic linkages in glycogen by scission of a 1,4-alpha-linked oligosaccharide from growing alpha-1,4-glucan chains and the subsequent attachment of the oligosaccharide to the alpha-1,6 position. This is 1,4-alpha-glucan branching enzyme GlgB from Haemophilus influenzae (strain 86-028NP).